The chain runs to 297 residues: tRNA uridine(34) hydroxylase (297 aa).

The Rhodanese domain maps to serine 133 to leucine 228. Cysteine 188 functions as the Cysteine persulfide intermediate in the catalytic mechanism.

Belongs to the TrhO family.

It catalyses the reaction uridine(34) in tRNA + AH2 + O2 = 5-hydroxyuridine(34) in tRNA + A + H2O. Its function is as follows. Catalyzes oxygen-dependent 5-hydroxyuridine (ho5U) modification at position 34 in tRNAs. This Pseudarthrobacter chlorophenolicus (strain ATCC 700700 / DSM 12829 / CIP 107037 / JCM 12360 / KCTC 9906 / NCIMB 13794 / A6) (Arthrobacter chlorophenolicus) protein is tRNA uridine(34) hydroxylase.